Consider the following 403-residue polypeptide: Palmitoyltransferase ZDHHC23-A (403 aa).

The Cytoplasmic segment spans residues 1 to 70 (MKRERFKPPE…ADRLGVSCCT (70 aa)). A helical transmembrane segment spans residues 71–91 (VGPLRLELSVLPPMVLIPGLL). Position 92 (arginine 92) is a topological domain, lumenal. The helical transmembrane segment at 93–113 (VAAINCLLGVIILTALPLLVL) threads the bilayer. Over 114 to 125 (WYYYMTHRRKRR) the chain is Cytoplasmic. The helical transmembrane segment at 126 to 146 (TLFFLSLALFSLAYMYYLFLT) threads the bilayer. Topologically, residues 147–153 (EIVPRGD) are lumenal. The chain crosses the membrane as a helical span at residues 154–174 (VTHLQVVTATTGMMLTLISLV). Residues 175 to 268 (RTKQGPGFVK…NSCVGQANHR (94 aa)) lie on the Cytoplasmic side of the membrane. Residues 225-275 (KKCPVCQLVRPPRAGHCRICGACVLRMDHHCVWINSCVGQANHRQFILTLL) enclose the DHHC domain. The S-palmitoyl cysteine intermediate role is filled by cysteine 255. Residues 269–289 (QFILTLLLFLLTSFYGISLVL) traverse the membrane as a helical segment. Residues 290–319 (RSICPKQSLFTAMLYCPGVYNQYSTALCFT) are Lumenal-facing. The chain crosses the membrane as a helical span at residues 320–340 (CVWYSVIITGGLLHLFILQII). Residues 341 to 403 (NVSCNVTERE…GSSLNLTDMV (63 aa)) are Cytoplasmic-facing.

This sequence belongs to the DHHC palmitoyltransferase family.

The protein resides in the golgi apparatus membrane. It localises to the golgi apparatus. It is found in the trans-Golgi network membrane. The enzyme catalyses L-cysteinyl-[protein] + hexadecanoyl-CoA = S-hexadecanoyl-L-cysteinyl-[protein] + CoA. Palmitoyltransferase that could catalyze the addition of palmitate onto various protein substrates and be involved in a variety of cellular processes. The polypeptide is Palmitoyltransferase ZDHHC23-A (zdhhc23a) (Danio rerio (Zebrafish)).